Consider the following 107-residue polypeptide: Integration host factor subunit beta (107 aa).

The interval Pro78–Arg107 is disordered. Basic and acidic residues predominate over residues Pro82 to Asp101.

It belongs to the bacterial histone-like protein family. Heterodimer of an alpha and a beta chain.

Its function is as follows. This protein is one of the two subunits of integration host factor, a specific DNA-binding protein that functions in genetic recombination as well as in transcriptional and translational control. This is Integration host factor subunit beta from Burkholderia multivorans (strain ATCC 17616 / 249).